The chain runs to 812 residues: DNA replication licensing factor MCM3 (812 aa).

Ala2 is modified (N-acetylalanine). Ser160 is modified (phosphoserine). The residue at position 293 (Lys293) is an N6-acetyllysine. The MCM domain maps to 295–502 (VFEQLARSLA…QDREISDHVL (208 aa)). 5 residues coordinate ADP: Gln353, Leu393, Glu394, Ala395, and Ala397. The Arginine finger motif lies at 477–480 (SRFD). Lys547 bears the N6-acetyllysine mark. Ser611 carries the post-translational modification Phosphoserine. Arg664 serves as a coordination point for ATP. A disordered region spans residues 664-744 (RKKASEDESD…TQDSQKVELS (81 aa)). 3 positions are modified to phosphoserine: Ser668, Ser672, and Ser681. Over residues 670-681 (DESDLEDEEEKS) the composition is skewed to acidic residues. Residue Tyr705 is modified to Phosphotyrosine. Ser708 is modified (phosphoserine). Phosphothreonine is present on residues Thr719, Thr722, and Thr729. A compositionally biased stretch (basic and acidic residues) spans 720 to 744 (PKTDDSQEKTDDSQETQDSQKVELS). Ser732 and Ser738 each carry phosphoserine.

This sequence belongs to the MCM family. As to quaternary structure, component of the MCM2-7 complex. The complex forms a toroidal hexameric ring with the proposed subunit order MCM2-MCM6-MCM4-MCM7-MCM3-MCM5. Component of the CMG helicase complex, a hexameric ring of related MCM2-7 subunits stabilized by CDC45 and the tetrameric GINS complex. Associated with the replication-specific DNA polymerase alpha. Interacts with MCMBP. Interacts with ANKRD17. Interacts with MCM3AP; this interaction leads to MCM3 acetylation. Acetylated by MCM3AP. In terms of processing, O-glycosylated (O-GlcNAcylated), in a cell cycle-dependent manner.

The protein localises to the nucleus. It is found in the chromosome. It catalyses the reaction ATP + H2O = ADP + phosphate + H(+). Functionally, acts as a component of the MCM2-7 complex (MCM complex) which is the replicative helicase essential for 'once per cell cycle' DNA replication initiation and elongation in eukaryotic cells. Core component of CDC45-MCM-GINS (CMG) helicase, the molecular machine that unwinds template DNA during replication, and around which the replisome is built. The active ATPase sites in the MCM2-7 ring are formed through the interaction surfaces of two neighboring subunits such that a critical structure of a conserved arginine finger motif is provided in trans relative to the ATP-binding site of the Walker A box of the adjacent subunit. The six ATPase active sites, however, are likely to contribute differentially to the complex helicase activity. Required for the entry in S phase and for cell division. The sequence is that of DNA replication licensing factor MCM3 (Mcm3) from Mus musculus (Mouse).